We begin with the raw amino-acid sequence, 668 residues long: Envelope glycoprotein (668 aa).

A signal peptide spans 1–34 (MEGPTHPKPSKDKTFSWDLIILVGVLLRLDAGMA). At 35 to 605 (NPSPHQVYNI…FNKSPWFTTL (571 aa)) the chain is on the extracellular side. Asparagine 43 and asparagine 58 each carry an N-linked (GlcNAc...) asparagine; by host glycan. Disulfide bonds link cysteine 115/cysteine 132 and cysteine 124/cysteine 137. The interval 243 to 264 (PQAMGPNPVLPDQKPPSRQSQI) is disordered. N-linked (GlcNAc...) asparagine; by host glycans are attached at residues asparagine 286, asparagine 322, and asparagine 327. 3 disulfides stabilise this stretch: cysteine 332/cysteine 335, cysteine 332/cysteine 558, and cysteine 550/cysteine 557. The short motif at 332 to 335 (CWLC) is the CXXC element. N-linked (GlcNAc...) asparagine; by host glycosylation is found at asparagine 351, asparagine 354, asparagine 394, asparagine 410, and asparagine 430. A fusion peptide region spans residues 467-487 (PISLTVALMLGGITVGGMARN). Coiled-coil stretches lie at residues 495–544 (LETA…ILFL) and 554–590 (KEEC…SQQD). The tract at residues 533–549 (LQNRRGLDILFLQEGGL) is immunosuppression. Residues 550-558 (CTALKEECC) carry the CX6CC motif. Residues 606–626 (ISSIMGPLMILLLILLFGPCI) form a helical membrane-spanning segment. The S-palmitoyl cysteine; by host moiety is linked to residue cysteine 625. Topologically, residues 627–668 (LNRLVQFVKDRISVVQTLVLTQQYQRLGQWRLRPTVSPQLNV) are cytoplasmic. The YXXL motif; contains endocytosis signal signature appears at 650 to 653 (YQRL).

As to quaternary structure, the mature envelope protein (Env) consists of a trimer of SU-TM heterodimers attached by a labile interchain disulfide bond. Specific enzymatic cleavages in vivo yield mature proteins. Envelope glycoproteins are synthesized as an inactive precursor that is N-glycosylated and processed likely by host cell furin or by a furin-like protease in the Golgi to yield the mature SU and TM proteins. The cleavage site between SU and TM requires the minimal sequence [KR]-X-[KR]-R. The R-peptide is released from the C-terminus of the cytoplasmic tail of the TM protein upon particle formation as a result of proteolytic cleavage by the viral protease. Cleavage of this peptide is required for TM to become fusogenic. In terms of processing, the CXXC motif is highly conserved across a broad range of retroviral envelope proteins. It is thought to participate in the formation of a labile disulfide bond possibly with the CX6CC motif present in the transmembrane protein. Isomerization of the intersubunit disulfide bond to an SU intrachain disulfide bond is thought to occur upon receptor recognition in order to allow membrane fusion. Post-translationally, the transmembrane protein is palmitoylated. The R-peptide is palmitoylated.

It is found in the virion membrane. It localises to the host cell membrane. Functionally, the surface protein (SU) attaches the virus to the host cell by binding to its receptor. This interaction triggers the refolding of the transmembrane protein (TM) and is thought to activate its fusogenic potential by unmasking its fusion peptide. Fusion occurs at the host cell plasma membrane. Its function is as follows. The transmembrane protein (TM) acts as a class I viral fusion protein. Under the current model, the protein has at least 3 conformational states: pre-fusion native state, pre-hairpin intermediate state, and post-fusion hairpin state. During viral and target cell membrane fusion, the coiled coil regions (heptad repeats) assume a trimer-of-hairpins structure, positioning the fusion peptide in close proximity to the C-terminal region of the ectodomain. The formation of this structure appears to drive apposition and subsequent fusion of viral and target cell membranes. Membranes fusion leads to delivery of the nucleocapsid into the cytoplasm. In Felidae (cat family), this protein is Envelope glycoprotein (env).